The chain runs to 247 residues: tRNA (guanine-N(1)-)-methyltransferase (247 aa).

S-adenosyl-L-methionine is bound by residues Gly-115 and Ile-134–Leu-139.

The protein belongs to the RNA methyltransferase TrmD family. In terms of assembly, homodimer.

It is found in the cytoplasm. It catalyses the reaction guanosine(37) in tRNA + S-adenosyl-L-methionine = N(1)-methylguanosine(37) in tRNA + S-adenosyl-L-homocysteine + H(+). Specifically methylates guanosine-37 in various tRNAs. The chain is tRNA (guanine-N(1)-)-methyltransferase from Anaeromyxobacter sp. (strain K).